The following is a 380-amino-acid chain: tRNA-specific 2-thiouridylase MnmA (380 aa).

ATP contacts are provided by residues 6 to 13 and Met32; that span reads ALSGGVDS. Cys101 functions as the Nucleophile in the catalytic mechanism. Cys101 and Cys199 are disulfide-bonded. ATP is bound at residue Gly125. The interaction with tRNA stretch occupies residues 148 to 150; it reads KDQ. The active-site Cysteine persulfide intermediate is Cys199.

It belongs to the MnmA/TRMU family.

It localises to the cytoplasm. It catalyses the reaction S-sulfanyl-L-cysteinyl-[protein] + uridine(34) in tRNA + AH2 + ATP = 2-thiouridine(34) in tRNA + L-cysteinyl-[protein] + A + AMP + diphosphate + H(+). Its function is as follows. Catalyzes the 2-thiolation of uridine at the wobble position (U34) of tRNA, leading to the formation of s(2)U34. The protein is tRNA-specific 2-thiouridylase MnmA of Beutenbergia cavernae (strain ATCC BAA-8 / DSM 12333 / CCUG 43141 / JCM 11478 / NBRC 16432 / NCIMB 13614 / HKI 0122).